Reading from the N-terminus, the 275-residue chain is Phosphate import ATP-binding protein PstB (275 aa).

The 242-residue stretch at 29-270 folds into the ABC transporter domain; the sequence is VSVRDLNFYY…PTDRRTQDYI (242 aa). 61–68 lines the ATP pocket; that stretch reads GPSGCGKS.

It belongs to the ABC transporter superfamily. Phosphate importer (TC 3.A.1.7) family. In terms of assembly, the complex is composed of two ATP-binding proteins (PstB), two transmembrane proteins (PstC and PstA) and a solute-binding protein (PstS).

It is found in the cell inner membrane. The enzyme catalyses phosphate(out) + ATP + H2O = ADP + 2 phosphate(in) + H(+). Part of the ABC transporter complex PstSACB involved in phosphate import. Responsible for energy coupling to the transport system. This is Phosphate import ATP-binding protein PstB from Rhodopseudomonas palustris (strain BisB18).